Consider the following 351-residue polypeptide: Paired box protein 2 homolog (351 aa).

Residues 91–217 (SHTGVNQLGG…SSINRIVRNK (127 aa)) constitute a DNA-binding region (paired). Residues 94 to 150 (GVNQLGGVFVNGRPLPDTIRAQIVEMSQHGTRPCDISRQLKVSHGCVSKILGRYYST) are PAI subdomain. The tract at residues 169–217 (RVVECIAGYKRANPTMFAWEIRQKLIEDQICGEENVPSVSSINRIVRNK) is RED subdomain. Over residues 226–246 (PTSVTPSVARPSSATSQNQRS) the composition is skewed to polar residues. The interval 226–258 (PTSVTPSVARPSSATSQNQRSPPRGVQQHMQQS) is disordered.

The protein resides in the nucleus. It localises to the chromosome. Transcription factor. Involved in negatively modulating apoptosis in germline and somatic cells, acting in partial redundancy with transcription factor egl-38/PAX5, probably by directly regulating transcription of apoptosis regulator ced-9. May bind to the DNA sequence motif 5'-GTAACG-3' in regulatory elements. This Caenorhabditis elegans protein is Paired box protein 2 homolog.